The primary structure comprises 239 residues: tRNA (guanine-N(1)-)-methyltransferase (239 aa).

Residues glycine 110 and 130–135 each bind S-adenosyl-L-methionine; that span reads VGDYVL.

This sequence belongs to the RNA methyltransferase TrmD family. Homodimer.

The protein localises to the cytoplasm. The catalysed reaction is guanosine(37) in tRNA + S-adenosyl-L-methionine = N(1)-methylguanosine(37) in tRNA + S-adenosyl-L-homocysteine + H(+). Its function is as follows. Specifically methylates guanosine-37 in various tRNAs. This Borrelia hermsii (strain HS1 / DAH) protein is tRNA (guanine-N(1)-)-methyltransferase.